We begin with the raw amino-acid sequence, 172 residues long: Neuropeptide-like protein nlp-8 (172 aa).

The first 26 residues, 1-26 (MSQKLLPISPLQLLFLQCLLIGFTAA), serve as a signal peptide directing secretion.

May be processed by convertase egl-3.

The protein localises to the secreted. Its function is as follows. Neuropeptide-like protein. Plays a role in behaviors associated with a sleep-like state induced by stress (SIS), acting in concert with the FARP (FMRFamide related) peptides, flp-13 and flp-24. This is Neuropeptide-like protein nlp-8 from Caenorhabditis elegans.